A 565-amino-acid polypeptide reads, in one-letter code: Mitochondrial distribution and morphology protein 34 (565 aa).

Positions M1 to E208 constitute an SMP-LTD domain. The span at S209–G220 shows a compositional bias: polar residues. Disordered regions lie at residues S209–L241, F347–A463, and M533–H565. Residues P353–R367 are compositionally biased toward basic residues. Over residues V368 to D378 the composition is skewed to basic and acidic residues. Positions S382 to S391 are enriched in low complexity. Composition is skewed to polar residues over residues E392–S402 and Q439–A463.

It belongs to the MDM34 family. In terms of assembly, component of the ER-mitochondria encounter structure (ERMES) or MDM complex, composed of mmm1, mdm10, mdm12 and mdm34.

It is found in the mitochondrion outer membrane. Its function is as follows. Component of the ERMES/MDM complex, which serves as a molecular tether to connect the endoplasmic reticulum (ER) and mitochondria. Components of this complex are involved in the control of mitochondrial shape and protein biogenesis, and function in nonvesicular lipid trafficking between the ER and mitochondria. Mdm34 is required for the interaction of the ER-resident membrane protein mmm1 and the outer mitochondrial membrane-resident beta-barrel protein mdm10. The polypeptide is Mitochondrial distribution and morphology protein 34 (Talaromyces marneffei (strain ATCC 18224 / CBS 334.59 / QM 7333) (Penicillium marneffei)).